A 470-amino-acid chain; its full sequence is Zinc finger CCCH domain-containing protein 7 (470 aa).

Positions Ala122–His144 are disordered. The segment covering Gln131–Arg142 has biased composition (polar residues). C3H1-type zinc fingers lie at residues Ala240 to Ser269, Val273 to Ile294, Pro295 to Val321, Asn322 to Asn349, and Cys350 to Asn372. Positions Pro370–Arg381 are enriched in basic residues. A disordered region spans residues Pro370–Asn389.

Functionally, possesses RNA-binding and ribonuclease activities in vitro. The chain is Zinc finger CCCH domain-containing protein 7 from Arabidopsis thaliana (Mouse-ear cress).